The primary structure comprises 1342 residues: DNA-directed RNA polymerase subunit beta (1342 aa).

Belongs to the RNA polymerase beta chain family. As to quaternary structure, the RNAP catalytic core consists of 2 alpha, 1 beta, 1 beta' and 1 omega subunit. When a sigma factor is associated with the core the holoenzyme is formed, which can initiate transcription.

It catalyses the reaction RNA(n) + a ribonucleoside 5'-triphosphate = RNA(n+1) + diphosphate. Its function is as follows. DNA-dependent RNA polymerase catalyzes the transcription of DNA into RNA using the four ribonucleoside triphosphates as substrates. The sequence is that of DNA-directed RNA polymerase subunit beta from Histophilus somni (strain 2336) (Haemophilus somnus).